The primary structure comprises 427 residues: Tol-Pal system protein TolB (427 aa).

The N-terminal stretch at Met1–Ala23 is a signal peptide.

This sequence belongs to the TolB family. As to quaternary structure, the Tol-Pal system is composed of five core proteins: the inner membrane proteins TolA, TolQ and TolR, the periplasmic protein TolB and the outer membrane protein Pal. They form a network linking the inner and outer membranes and the peptidoglycan layer.

It is found in the periplasm. Functionally, part of the Tol-Pal system, which plays a role in outer membrane invagination during cell division and is important for maintaining outer membrane integrity. The polypeptide is Tol-Pal system protein TolB (Haemophilus influenzae (strain 86-028NP)).